Consider the following 304-residue polypeptide: Aspartate carbamoyltransferase catalytic subunit (304 aa).

Arg-54 and Thr-55 together coordinate carbamoyl phosphate. Lys-83 serves as a coordination point for L-aspartate. Residues Arg-104, His-132, and Gln-135 each coordinate carbamoyl phosphate. Positions 165 and 226 each coordinate L-aspartate. Carbamoyl phosphate-binding residues include Leu-265 and Pro-266.

The protein belongs to the aspartate/ornithine carbamoyltransferase superfamily. ATCase family. As to quaternary structure, heterooligomer of catalytic and regulatory chains.

It carries out the reaction carbamoyl phosphate + L-aspartate = N-carbamoyl-L-aspartate + phosphate + H(+). Its pathway is pyrimidine metabolism; UMP biosynthesis via de novo pathway; (S)-dihydroorotate from bicarbonate: step 2/3. Catalyzes the condensation of carbamoyl phosphate and aspartate to form carbamoyl aspartate and inorganic phosphate, the committed step in the de novo pyrimidine nucleotide biosynthesis pathway. The polypeptide is Aspartate carbamoyltransferase catalytic subunit (Pyrobaculum islandicum (strain DSM 4184 / JCM 9189 / GEO3)).